Here is a 151-residue protein sequence, read N- to C-terminus: Large ribosomal subunit protein uL15 (151 aa).

A disordered region spans residues 1 to 51; the sequence is MPLKIEDLKPTPGSRKPKKRLGRGIGSGLGKTAGKGHKGEKARGRGKIGRT. Residues 23-33 are compositionally biased toward gly residues; sequence RGIGSGLGKTA.

This sequence belongs to the universal ribosomal protein uL15 family. Part of the 50S ribosomal subunit.

Binds to the 23S rRNA. This Petrotoga mobilis (strain DSM 10674 / SJ95) protein is Large ribosomal subunit protein uL15.